The chain runs to 719 residues: DNA replication licensing factor MCM7 (719 aa).

The residue at position 2 (A2) is an N-acetylalanine. Glycyl lysine isopeptide (Lys-Gly) (interchain with G-Cter in SUMO2) cross-links involve residues K15 and K28. Phosphoserine occurs at positions 121 and 314. Residues 332-538 enclose the MCM domain; that stretch reads FYEKLAASIA…NDLRLAQHIT (207 aa). An ATP-binding site is contributed by Y345. S365 is modified (phosphoserine). Residues G384, A386, K387, S388, and N489 each coordinate ATP. S500 is subject to Phosphoserine. Residues 513 to 516 carry the Arginine finger motif; that stretch reads SRFD. R514 lines the ATP pocket. The tract at residues 521–564 is interaction with RAD17; the sequence is IQDRPDRDNDLRLAQHITYVHQHSRQPPAQFEPLDMKLMRRYIA. The interval 577–719 is interaction with ATRIP; it reads LADYITAAYV…NTARTRITFV (143 aa). An ATP-binding site is contributed by R604. At S678 the chain carries Phosphoserine.

Belongs to the MCM family. In terms of assembly, component of the MCM2-7 complex. The complex forms a toroidal hexameric ring with the proposed subunit order MCM2-MCM6-MCM4-MCM7-MCM3-MCM5. Component of the CMG helicase complex, a hexameric ring of related MCM2-7 subunits stabilized by CDC45 and the tetrameric GINS complex. Interacts with the ATR-ATRIP complex and with RAD17. Interacts with TIPIN. Interacts with MCMBP. Interacts with ANKRD17. Component of the replisome complex composed of at least DONSON, MCM2, MCM7, PCNA and TICRR. In terms of processing, O-glycosylated (O-GlcNAcylated), in a cell cycle-dependent manner. Post-translationally, ubiquitinated by ECS(LRR1) E3 ubiquitin-protein ligase complex when forks converge following formation of DNA interstrand cross-links. During mitosis, ubiquitinated by TRAIP when forks converge following formation of DNA interstrand cross-links. Short ubiquitin chains on MCM7 promote recruitment of DNA glycosylase NEIL3. If the interstrand cross-link cannot be cleaved by NEIL3, the ubiquitin chains continue to grow on MCM7, promoting the unloading of the CMG helicase complex by the VCP/p97 ATPase.

It is found in the nucleus. The protein resides in the chromosome. It catalyses the reaction ATP + H2O = ADP + phosphate + H(+). Its function is as follows. Acts as a component of the MCM2-7 complex (MCM complex) which is the replicative helicase essential for 'once per cell cycle' DNA replication initiation and elongation in eukaryotic cells. Core component of CDC45-MCM-GINS (CMG) helicase, the molecular machine that unwinds template DNA during replication, and around which the replisome is built. The active ATPase sites in the MCM2-7 ring are formed through the interaction surfaces of two neighboring subunits such that a critical structure of a conserved arginine finger motif is provided in trans relative to the ATP-binding site of the Walker A box of the adjacent subunit. The six ATPase active sites, however, are likely to contribute differentially to the complex helicase activity. Required for S-phase checkpoint activation upon UV-induced damage. The sequence is that of DNA replication licensing factor MCM7 (MCM7) from Bos taurus (Bovine).